The primary structure comprises 547 residues: Chaperonin GroEL (547 aa).

ATP-binding positions include 30 to 33 (TLGP), K51, 87 to 91 (DGTTT), G415, and D496. Residues 528 to 547 (KGGGAPAGGGMPGGMGDMDF) are disordered.

This sequence belongs to the chaperonin (HSP60) family. In terms of assembly, forms a cylinder of 14 subunits composed of two heptameric rings stacked back-to-back. Interacts with the co-chaperonin GroES.

It is found in the cytoplasm. It catalyses the reaction ATP + H2O + a folded polypeptide = ADP + phosphate + an unfolded polypeptide.. Functionally, together with its co-chaperonin GroES, plays an essential role in assisting protein folding. The GroEL-GroES system forms a nano-cage that allows encapsulation of the non-native substrate proteins and provides a physical environment optimized to promote and accelerate protein folding. This Caulobacter vibrioides (strain ATCC 19089 / CIP 103742 / CB 15) (Caulobacter crescentus) protein is Chaperonin GroEL.